The chain runs to 450 residues: UDP-N-acetylmuramoylalanine--D-glutamate ligase (450 aa).

Gly-119–Thr-125 contributes to the ATP binding site.

It belongs to the MurCDEF family.

It is found in the cytoplasm. The catalysed reaction is UDP-N-acetyl-alpha-D-muramoyl-L-alanine + D-glutamate + ATP = UDP-N-acetyl-alpha-D-muramoyl-L-alanyl-D-glutamate + ADP + phosphate + H(+). Its pathway is cell wall biogenesis; peptidoglycan biosynthesis. Its function is as follows. Cell wall formation. Catalyzes the addition of glutamate to the nucleotide precursor UDP-N-acetylmuramoyl-L-alanine (UMA). The sequence is that of UDP-N-acetylmuramoylalanine--D-glutamate ligase from Streptococcus thermophilus (strain CNRZ 1066).